A 326-amino-acid chain; its full sequence is UDP-N-acetylglucosamine transporter (326 aa).

A run of 8 helical transmembrane segments spans residues 8 to 24 (LSLGILVFQTTSLVLTM), 42 to 58 (AVVVAELLKIMACILLV), 138 to 154 (VYQWLSLVILMTGVAFV), 174 to 190 (FVGLMAVLTACFSSGFA), 210 to 226 (IQLGFFGSIFGLMGVYI), 247 to 263 (IVVILQALGGLVIAAVI), 269 to 285 (ILKGFATSLSIILSTLI), and 296 to 312 (TSVFFLGAILVITATFL).

Belongs to the nucleotide-sugar transporter family. SLC35A subfamily. As to quaternary structure, interacts with SLC35A2; the interaction is reduced in the presence of SLC35A4. Found in a complex with SLC35A2 and SLC35A4.

The protein resides in the golgi apparatus membrane. Functionally, uridine diphosphate-N-acetylglucosamine (UDP-GlcNAc) transporter in the Golgi apparatus. May supply UDP-GlcNAc as substrate for Golgi-resident glycosyltransferases that generate branching of diantennary oligosaccharides. This chain is UDP-N-acetylglucosamine transporter (SLC35A3), found in Canis lupus familiaris (Dog).